The primary structure comprises 398 residues: Nocardicin C N-oxygenase (398 aa).

Residues arginine 63–proline 90 are disordered. Histidine 93, arginine 97, arginine 289, histidine 345, and cysteine 347 together coordinate heme.

The protein belongs to the cytochrome P450 family. Heme is required as a cofactor.

The catalysed reaction is nocardicin C + 4 reduced [2Fe-2S]-[ferredoxin] + 2 O2 + 2 H(+) = nocardicin A + 4 oxidized [2Fe-2S]-[ferredoxin] + 3 H2O. It participates in antibiotic biosynthesis. Its function is as follows. Involved in the biosynthesis of the beta-lactam antibiotic nocardicin A. Catalyzes the conversion of nocardicin C to nocardicin A. Cannot use nocardicin G. This Nocardia uniformis subsp. tsuyamanensis protein is Nocardicin C N-oxygenase.